A 523-amino-acid polypeptide reads, in one-letter code: Lysine-specific demethylase 4D (523 aa).

Residues 18 to 60 (IMIFHPTKEEFNDFDKYIAYMESQGAHRAGLAKIIPPKEWKAR) form the JmjN domain. A polyADP-ribosyl glutamic acid mark is found at E26 and E27. Y136 provides a ligand contact to 2-oxoglutarate. Residues 146 to 312 (DENTKQWNLG…YGKMASQCSC (167 aa)) enclose the JmjC domain. 2 residues coordinate Fe cation: H192 and E194. Residues N202 and K210 each coordinate 2-oxoglutarate. Zn(2+)-binding residues include C238 and H244. K245 provides a ligand contact to 2-oxoglutarate. H280 is a Fe cation binding site. Zn(2+) contacts are provided by C310 and C312. The tract at residues 407-523 (RRSAVSGTAT…ASGCSWAPVP (117 aa)) is disordered. Residues 428 to 440 (KPSSTPSSTPGPS) show a composition bias toward low complexity. The span at 448–458 (NGRRGRGRPPQ) shows a compositional bias: basic residues.

The protein belongs to the JHDM3 histone demethylase family. It depends on Fe(2+) as a cofactor. Ubiquitinated via 'Lys-63'-linked ubiquitin chains. Deubiquitinated by USP14 with the help of TRIM14 leading to stabilization.

Its subcellular location is the nucleus. It catalyses the reaction N(6),N(6),N(6)-trimethyl-L-lysyl(9)-[histone H3] + 2 2-oxoglutarate + 2 O2 = N(6)-methyl-L-lysyl(9)-[histone H3] + 2 formaldehyde + 2 succinate + 2 CO2. Its function is as follows. Histone demethylase that specifically demethylates 'Lys-9' of histone H3, thereby playing a central role in histone code. Does not demethylate histone H3 'Lys-4', H3 'Lys-27', H3 'Lys-36' nor H4 'Lys-20'. Demethylates both di- and trimethylated H3 'Lys-9' residue, while it has no activity on monomethylated residues. Demethylation of Lys residue generates formaldehyde and succinate. This Homo sapiens (Human) protein is Lysine-specific demethylase 4D (KDM4D).